The following is a 296-amino-acid chain: 4-hydroxy-tetrahydrodipicolinate synthase (296 aa).

Position 47 (Thr47) interacts with pyruvate. The Proton donor/acceptor role is filled by Tyr136. Lys164 acts as the Schiff-base intermediate with substrate in catalysis. Val206 is a binding site for pyruvate.

It belongs to the DapA family. Homotetramer; dimer of dimers.

Its subcellular location is the cytoplasm. It catalyses the reaction L-aspartate 4-semialdehyde + pyruvate = (2S,4S)-4-hydroxy-2,3,4,5-tetrahydrodipicolinate + H2O + H(+). It participates in amino-acid biosynthesis; L-lysine biosynthesis via DAP pathway; (S)-tetrahydrodipicolinate from L-aspartate: step 3/4. In terms of biological role, catalyzes the condensation of (S)-aspartate-beta-semialdehyde [(S)-ASA] and pyruvate to 4-hydroxy-tetrahydrodipicolinate (HTPA). The protein is 4-hydroxy-tetrahydrodipicolinate synthase of Thermosynechococcus vestitus (strain NIES-2133 / IAM M-273 / BP-1).